The sequence spans 250 residues: Flavin-dependent thymidylate synthase (250 aa).

Residues 7–233 (LSVELIACSS…PTVFGDFEIE (227 aa)) enclose the ThyX domain. DUMP is bound by residues 92–95 (ELVR), 103–107 (QLSQR), and Arg172. FAD is bound by residues 95-97 (RHR) and Gln103. Residues 95–105 (RHRHFSFSQLS) carry the ThyX motif motif. FAD contacts are provided by residues 188–190 (NFR) and His194. Arg199 lines the dUMP pocket. The active-site Involved in ionization of N3 of dUMP, leading to its activation is the Arg199.

This sequence belongs to the thymidylate synthase ThyX family. As to quaternary structure, homotetramer. It depends on FAD as a cofactor.

The catalysed reaction is dUMP + (6R)-5,10-methylene-5,6,7,8-tetrahydrofolate + NADPH + H(+) = dTMP + (6S)-5,6,7,8-tetrahydrofolate + NADP(+). The protein operates within pyrimidine metabolism; dTTP biosynthesis. In terms of biological role, catalyzes the reductive methylation of 2'-deoxyuridine-5'-monophosphate (dUMP) to 2'-deoxythymidine-5'-monophosphate (dTMP) while utilizing 5,10-methylenetetrahydrofolate (mTHF) as the methyl donor, and NADPH and FADH(2) as the reductant. This Corynebacterium glutamicum (strain ATCC 13032 / DSM 20300 / JCM 1318 / BCRC 11384 / CCUG 27702 / LMG 3730 / NBRC 12168 / NCIMB 10025 / NRRL B-2784 / 534) protein is Flavin-dependent thymidylate synthase.